The following is a 156-amino-acid chain: Protein-export protein SecB (156 aa).

The protein belongs to the SecB family. Homotetramer, a dimer of dimers. One homotetramer interacts with 1 SecA dimer.

The protein localises to the cytoplasm. One of the proteins required for the normal export of preproteins out of the cell cytoplasm. It is a molecular chaperone that binds to a subset of precursor proteins, maintaining them in a translocation-competent state. It also specifically binds to its receptor SecA. This Aeromonas hydrophila subsp. hydrophila (strain ATCC 7966 / DSM 30187 / BCRC 13018 / CCUG 14551 / JCM 1027 / KCTC 2358 / NCIMB 9240 / NCTC 8049) protein is Protein-export protein SecB.